Here is an 86-residue protein sequence, read N- to C-terminus: Small ribosomal subunit protein bS20 (86 aa).

Belongs to the bacterial ribosomal protein bS20 family.

Binds directly to 16S ribosomal RNA. The polypeptide is Small ribosomal subunit protein bS20 (Bifidobacterium longum subsp. infantis (strain ATCC 15697 / DSM 20088 / JCM 1222 / NCTC 11817 / S12)).